A 74-amino-acid chain; its full sequence is Brevinin-2Ef (74 aa).

Positions 1 to 22 are cleaved as a signal peptide; sequence MFTMKKSLLLIFFLGTISLSLC. Positions 23-41 are excised as a propeptide; the sequence is QEERNADDDDGEMTEEEKR. Cys-68 and Cys-74 are joined by a disulfide.

The protein belongs to the frog skin active peptide (FSAP) family. Brevinin subfamily. As to expression, expressed by the skin glands.

The protein localises to the secreted. Its function is as follows. Shows antibacterial activity against representative Gram-negative and Gram-positive bacterial species, and hemolytic activity. This is Brevinin-2Ef from Pelophylax lessonae (Pool frog).